A 156-amino-acid chain; its full sequence is Ribonuclease H (156 aa).

An RNase H type-1 domain is found at 7–148 (QDKIVMIATD…ADQLASDAAI (142 aa)). Positions 16, 54, 76, and 140 each coordinate Mg(2+).

Belongs to the RNase H family. In terms of assembly, monomer. Mg(2+) serves as cofactor.

Its subcellular location is the cytoplasm. The catalysed reaction is Endonucleolytic cleavage to 5'-phosphomonoester.. Its function is as follows. Endonuclease that specifically degrades the RNA of RNA-DNA hybrids. In Zymomonas mobilis subsp. mobilis (strain ATCC 31821 / ZM4 / CP4), this protein is Ribonuclease H (rnhA).